The sequence spans 427 residues: UDP-N-acetyl-D-mannosamine dehydrogenase (427 aa).

6 residues coordinate NAD(+): Tyr-19, Ile-20, Asp-39, Arg-44, Thr-91, and Thr-130. Residues Arg-155, Val-156, Lys-207, Asn-211, Arg-214, His-245, Arg-247, and Gly-258 each coordinate UDP-N-acetyl-alpha-D-mannosaminouronate. The active-site Proton donor/acceptor is the Lys-207. The active-site Nucleophile is Cys-261. Tyr-318 and Lys-319 together coordinate UDP-N-acetyl-alpha-D-mannosaminouronate. An NAD(+)-binding site is contributed by Arg-326. Position 404 (Lys-404) interacts with UDP-N-acetyl-alpha-D-mannosaminouronate.

This sequence belongs to the UDP-glucose/GDP-mannose dehydrogenase family. Homotetramer; probably dimer of dimers.

It catalyses the reaction UDP-N-acetyl-alpha-D-mannosamine + 2 NAD(+) + H2O = UDP-N-acetyl-alpha-D-mannosaminouronate + 2 NADH + 3 H(+). Functionally, catalyzes the four-electron oxidation of UDP-N-acetyl-D-mannosamine (UDP-ManNAc), reducing NAD(+) and releasing UDP-N-acetylmannosaminuronic acid (UDP-ManNAcA). This chain is UDP-N-acetyl-D-mannosamine dehydrogenase (wecC), found in Methanococcus maripaludis (strain C7 / ATCC BAA-1331).